The following is a 217-amino-acid chain: GTP-binding protein Rit2 (217 aa).

GTP contacts are provided by residues 27–34 (GAGGVGKS), 74–78 (DTAGQ), and 133–136 (NKID).

The protein belongs to the small GTPase superfamily. Ras family. Interacts with AFDN, the C-terminal domain of RALGDS and RLF, but not with RIN1 and PIK3CA. RLF binds exclusively to the active GTP-bound form. Binds calmodulin. Interacts with PLXNB3.

The protein resides in the nucleus. It is found in the cell membrane. It carries out the reaction GTP + H2O = GDP + phosphate + H(+). Alternates between an inactive form bound to GDP and an active form bound to GTP. Binds and exchanges GTP and GDP. The sequence is that of GTP-binding protein Rit2 (Rit2) from Rattus norvegicus (Rat).